The following is a 220-amino-acid chain: Thiamine-phosphate synthase (220 aa).

Residues 39–43 (QLRDK) and N80 each bind 4-amino-2-methyl-5-(diphosphooxymethyl)pyrimidine. Positions 81 and 100 each coordinate Mg(2+). S119 is a 4-amino-2-methyl-5-(diphosphooxymethyl)pyrimidine binding site. 145–147 (TPT) contacts 2-[(2R,5Z)-2-carboxy-4-methylthiazol-5(2H)-ylidene]ethyl phosphate. K148 contributes to the 4-amino-2-methyl-5-(diphosphooxymethyl)pyrimidine binding site. Position 176 (G176) interacts with 2-[(2R,5Z)-2-carboxy-4-methylthiazol-5(2H)-ylidene]ethyl phosphate.

It belongs to the thiamine-phosphate synthase family. Requires Mg(2+) as cofactor.

It carries out the reaction 2-[(2R,5Z)-2-carboxy-4-methylthiazol-5(2H)-ylidene]ethyl phosphate + 4-amino-2-methyl-5-(diphosphooxymethyl)pyrimidine + 2 H(+) = thiamine phosphate + CO2 + diphosphate. It catalyses the reaction 2-(2-carboxy-4-methylthiazol-5-yl)ethyl phosphate + 4-amino-2-methyl-5-(diphosphooxymethyl)pyrimidine + 2 H(+) = thiamine phosphate + CO2 + diphosphate. The catalysed reaction is 4-methyl-5-(2-phosphooxyethyl)-thiazole + 4-amino-2-methyl-5-(diphosphooxymethyl)pyrimidine + H(+) = thiamine phosphate + diphosphate. Its pathway is cofactor biosynthesis; thiamine diphosphate biosynthesis; thiamine phosphate from 4-amino-2-methyl-5-diphosphomethylpyrimidine and 4-methyl-5-(2-phosphoethyl)-thiazole: step 1/1. Its function is as follows. Condenses 4-methyl-5-(beta-hydroxyethyl)thiazole monophosphate (THZ-P) and 2-methyl-4-amino-5-hydroxymethyl pyrimidine pyrophosphate (HMP-PP) to form thiamine monophosphate (TMP). This Mycobacterium ulcerans (strain Agy99) protein is Thiamine-phosphate synthase.